A 681-amino-acid chain; its full sequence is Methionine--tRNA ligase (681 aa).

The 'HIGH' region motif lies at 14–24 (PYANGSIHLGH). The Zn(2+) site is built by cysteine 145, cysteine 148, cysteine 158, and cysteine 161. The short motif at 331-335 (KMSKS) is the 'KMSKS' region element. Lysine 334 contributes to the ATP binding site. Residues 579-681 (TFAAVDLRVA…SGAKPGQRIK (103 aa)) enclose the tRNA-binding domain.

This sequence belongs to the class-I aminoacyl-tRNA synthetase family. MetG type 1 subfamily. As to quaternary structure, homodimer. Zn(2+) serves as cofactor.

It localises to the cytoplasm. It catalyses the reaction tRNA(Met) + L-methionine + ATP = L-methionyl-tRNA(Met) + AMP + diphosphate. Is required not only for elongation of protein synthesis but also for the initiation of all mRNA translation through initiator tRNA(fMet) aminoacylation. This is Methionine--tRNA ligase from Pseudomonas putida (strain W619).